The primary structure comprises 296 residues: 4-hydroxy-tetrahydrodipicolinate synthase (296 aa).

Threonine 47 contacts pyruvate. Tyrosine 135 functions as the Proton donor/acceptor in the catalytic mechanism. The active-site Schiff-base intermediate with substrate is the lysine 163. Isoleucine 205 contacts pyruvate.

Belongs to the DapA family. In terms of assembly, homotetramer; dimer of dimers.

It localises to the cytoplasm. The enzyme catalyses L-aspartate 4-semialdehyde + pyruvate = (2S,4S)-4-hydroxy-2,3,4,5-tetrahydrodipicolinate + H2O + H(+). Its pathway is amino-acid biosynthesis; L-lysine biosynthesis via DAP pathway; (S)-tetrahydrodipicolinate from L-aspartate: step 3/4. Functionally, catalyzes the condensation of (S)-aspartate-beta-semialdehyde [(S)-ASA] and pyruvate to 4-hydroxy-tetrahydrodipicolinate (HTPA). This Macrococcus caseolyticus (strain JCSC5402) (Macrococcoides caseolyticum) protein is 4-hydroxy-tetrahydrodipicolinate synthase.